The following is a 205-amino-acid chain: uncharacterized protein (205 aa).

Residues Met-1–Lys-63 lie on the Cytoplasmic side of the membrane. The helical transmembrane segment at Val-64–Leu-84 threads the bilayer. Residues Glu-85–Ser-124 are Extracellular-facing. A helical transmembrane segment spans residues Leu-125 to Phe-145. Residues Lys-146 to Val-205 lie on the Cytoplasmic side of the membrane.

It is found in the membrane. This is an uncharacterized protein from Saccharomyces cerevisiae (strain ATCC 204508 / S288c) (Baker's yeast).